Here is a 186-residue protein sequence, read N- to C-terminus: uncharacterized protein (186 aa).

CBS domains are found at residues 10–69 (IMKK…KLPP) and 77–133 (ISSG…IIST).

This is an uncharacterized protein from Methanocaldococcus jannaschii (strain ATCC 43067 / DSM 2661 / JAL-1 / JCM 10045 / NBRC 100440) (Methanococcus jannaschii).